We begin with the raw amino-acid sequence, 745 residues long: Cytoskeleton-associated protein 2-like (745 aa).

Disordered stretches follow at residues 26–305 (KGKL…VNRV), 319–362 (PATE…LGPQ), 422–483 (FPPQ…TYKR), and 608–638 (EAVT…PCPS). 2 stretches are compositionally biased toward polar residues: residues 67-89 (SKTT…ASQK) and 101-136 (GLTS…SRNP). The KEN box motif lies at 183–185 (KEN). The span at 192 to 202 (KPEKPDPELHS) shows a compositional bias: basic and acidic residues. A Glycyl lysine isopeptide (Lys-Gly) (interchain with G-Cter in SUMO1); alternate cross-link involves residue K195. K195 participates in a covalent cross-link: Glycyl lysine isopeptide (Lys-Gly) (interchain with G-Cter in SUMO2); alternate. 4 stretches are compositionally biased toward polar residues: residues 205 to 216 (KPNTGSSNQTQK), 224 to 233 (LSKSSVTQTA), 242 to 253 (FIRNTQIRTQAV), and 284 to 301 (NKTQ…QDIT). A compositionally biased stretch (polar residues) spans 427–442 (HFLNKTAPRTQASTAA). The span at 459-475 (KKPEGEDRRKQLEEWQK) shows a compositional bias: basic and acidic residues. The span at 608–624 (EAVTSDTSAAGTNTTSA) shows a compositional bias: polar residues. S745 is modified (phosphoserine).

The protein belongs to the CKAP2 family. In terms of processing, ubiquitinated by the anaphase promoting complex/cyclosome (APC/C). As to expression, highly expressed in regions of active neurogenesis and neural stem/progenitor cells (NSPCs), both embryonic and adult, not detected in lung, liver, kidney, heart, and skeletal muscle.

It localises to the cytoplasm. Its subcellular location is the cytoskeleton. The protein localises to the spindle pole. Functionally, microtubule-associated protein required for mitotic spindle formation and cell-cycle progression in neural progenitor cells. The protein is Cytoskeleton-associated protein 2-like (Ckap2l) of Mus musculus (Mouse).